We begin with the raw amino-acid sequence, 69 residues long: uncharacterized protein (69 aa).

2 consecutive 4Fe-4S ferredoxin-type domains span residues 2 to 30 (KIEI…KSKK) and 38 to 67 (PPIP…IELS). Residues cysteine 10, cysteine 13, cysteine 16, cysteine 20, cysteine 47, cysteine 50, cysteine 53, and cysteine 57 each coordinate [4Fe-4S] cluster.

[4Fe-4S] cluster is required as a cofactor.

This is an uncharacterized protein from Methanocaldococcus jannaschii (strain ATCC 43067 / DSM 2661 / JAL-1 / JCM 10045 / NBRC 100440) (Methanococcus jannaschii).